We begin with the raw amino-acid sequence, 215 residues long: Cytochrome b6 (215 aa).

Residues 32-52 (IFYCLGGITLVCFLIQFATGF) form a helical membrane-spanning segment. Cys-35 contacts heme c. Residues His-86 and His-100 each coordinate heme b. 3 helical membrane passes run 90–110 (ASMM…TGGF), 116–136 (LTWV…VTGY), and 186–206 (LHTF…FLMI). 2 residues coordinate heme b: His-187 and His-202.

The protein belongs to the cytochrome b family. PetB subfamily. As to quaternary structure, the 4 large subunits of the cytochrome b6-f complex are cytochrome b6, subunit IV (17 kDa polypeptide, PetD), cytochrome f and the Rieske protein, while the 4 small subunits are PetG, PetL, PetM and PetN. The complex functions as a dimer. Requires heme b as cofactor. The cofactor is heme c.

The protein localises to the cellular thylakoid membrane. Its function is as follows. Component of the cytochrome b6-f complex, which mediates electron transfer between photosystem II (PSII) and photosystem I (PSI), cyclic electron flow around PSI, and state transitions. The protein is Cytochrome b6 of Synechococcus sp. (strain JA-3-3Ab) (Cyanobacteria bacterium Yellowstone A-Prime).